The following is a 230-amino-acid chain: Phosphoenolpyruvate guanylyltransferase (230 aa).

Phosphoenolpyruvate is bound by residues T139, G155, and S158.

It belongs to the CofC family.

It carries out the reaction phosphoenolpyruvate + GTP + H(+) = enolpyruvoyl-2-diphospho-5'-guanosine + diphosphate. It functions in the pathway cofactor biosynthesis; coenzyme F420 biosynthesis. Guanylyltransferase that catalyzes the activation of phosphoenolpyruvate (PEP) as enolpyruvoyl-2-diphospho-5'-guanosine, via the condensation of PEP with GTP. It is involved in the biosynthesis of coenzyme F420, a hydride carrier cofactor. The chain is Phosphoenolpyruvate guanylyltransferase from Thermobaculum terrenum (strain ATCC BAA-798 / CCMEE 7001 / YNP1).